A 420-amino-acid chain; its full sequence is Glycogen synthase kinase-3 beta (420 aa).

The segment covering 1-22 (MSGRPRTTSFAESCKPVQQPSA) has biased composition (polar residues). The segment at 1 to 53 (MSGRPRTTSFAESCKPVQQPSAFGSMKVSRDKDGSKVTTVVATPGQGPDRPQE) is disordered. Ser-9 is modified (phosphoserine; by PKB/AKT1, RPS6KA3 and SGK3). Cys-14 carries S-palmitoyl cysteine lipidation. The Protein kinase domain occupies 56 to 340 (YTDTKVIGNG…PLEACAHSFF (285 aa)). ATP-binding positions include 62-70 (IGNGSFGVV) and Lys-85. Asp-181 acts as the Proton acceptor in catalysis. Position 216 is a phosphotyrosine (Tyr-216). Residues 385–420 (QAAASPPANATAASDTNAGDRGQTNNAASASASNST) form a disordered region. Composition is skewed to low complexity over residues 386 to 401 (AAAS…SDTN) and 409 to 420 (NNAASASASNST). Residue Ser-389 is modified to Phosphoserine.

It belongs to the protein kinase superfamily. CMGC Ser/Thr protein kinase family. GSK-3 subfamily. Monomer. Interacts with DAB2IP (via C2 domain); the interaction stimulates GSK3B kinase activation. Interacts (via C2 domain) with PPP2CA. Interacts with ARRB2, AXIN1, CABYR, DISC1, MMP2, MUC1, NIN, PRUNE1 and ZBED3. Interacts with AXIN1; the interaction mediates hyperphosphorylation of CTNNB1 leading to its ubiquitination and destruction. Interacts with and phosphorylates SNAI1. Interacts with DNM1L (via a C-terminal domain). Found in a complex composed of MACF1, APC, AXIN1, CTNNB1 and GSK3B. Interacts with SGK3. Interacts with the CLOCK-BMAL1 heterodimer. Interacts with the BMAL1. Interacts with CTNND2. The complex composed, at least, of APC, CTNNB1 and GSK3B interacts with JPT1; the interaction requires the inactive form of GSK3B (phosphorylated at 'Ser-9'). Forms a complex composed of PRKAR2A or PRKAR2B, GSK3B and GSKIP through GSKIP interaction; facilitates PKA-induced phosphorylation and regulates GSK3B activity. Interacts with GSKIP. Interacts with GID8. Interacts with PIWIL2. Interacts with LMBR1L. Interacts with DDX3X. Interacts with BIRC2. Interacts with TNFRSF10B; TNFRSF10B stimulation inhibits GSK3B kinase activity. Found in a complex with SLC39A6, SLC39A10 and with GSK3B that controls NCAM1 phosphorylation. Interacts with PKP3 (via ARM repeats); the interaction may be involved in PKP3 protein degradation. Post-translationally, phosphorylated by AKT1 and ILK1. Upon insulin-mediated signaling, the activated PKB/AKT1 and RPS6KA3 protein kinases phosphorylate and deactivate GSK3B, resulting in the dephosphorylation and activation of GYS1. Activated by phosphorylation at Tyr-216. Inactivated by phosphorylation at Ser-9. Phosphorylated in a circadian manner in the hippocampus. Mono-ADP-ribosylation by PARP10 negatively regulates kinase activity. In terms of processing, palmitoylated. Palmitoylation by ZDHHC4 prevents AKT1-mediated phosphorylation.

Its subcellular location is the cytoplasm. It is found in the nucleus. It localises to the membrane. The protein resides in the cell membrane. It catalyses the reaction L-seryl-[tau protein] + ATP = O-phospho-L-seryl-[tau protein] + ADP + H(+). The enzyme catalyses L-threonyl-[tau protein] + ATP = O-phospho-L-threonyl-[tau protein] + ADP + H(+). It carries out the reaction L-seryl-[protein] + ATP = O-phospho-L-seryl-[protein] + ADP + H(+). The catalysed reaction is L-threonyl-[protein] + ATP = O-phospho-L-threonyl-[protein] + ADP + H(+). Its activity is regulated as follows. Activated by phosphorylation at Tyr-216. In response to insulin, inhibited by phosphorylation at Ser-9 by PKB/AKT1; phosphorylation at this site causes a conformational change, preventing access of substrates to the active site. Inhibited by IL22 treatment which also triggers phosphorylation at Ser-9, promoting inactivation. Inhibited by lithium. Functionally, constitutively active protein kinase that acts as a negative regulator in the hormonal control of glucose homeostasis, Wnt signaling and regulation of transcription factors and microtubules, by phosphorylating and inactivating glycogen synthase (GYS1 or GYS2), EIF2B, CTNNB1/beta-catenin, APC, AXIN1, DPYSL2/CRMP2, JUN, NFATC1/NFATC, MAPT/TAU and MACF1. Requires primed phosphorylation of the majority of its substrates. In skeletal muscle, contributes to insulin regulation of glycogen synthesis by phosphorylating and inhibiting GYS1 activity and hence glycogen synthesis. May also mediate the development of insulin resistance by regulating activation of transcription factors. Regulates protein synthesis by controlling the activity of initiation factor 2B (EIF2BE/EIF2B5) in the same manner as glycogen synthase. In Wnt signaling, GSK3B forms a multimeric complex with APC, AXIN1 and CTNNB1/beta-catenin and phosphorylates the N-terminus of CTNNB1 leading to its degradation mediated by ubiquitin/proteasomes. Phosphorylates JUN at sites proximal to its DNA-binding domain, thereby reducing its affinity for DNA. Phosphorylates NFATC1/NFATC on conserved serine residues promoting NFATC1/NFATC nuclear export, shutting off NFATC1/NFATC gene regulation, and thereby opposing the action of calcineurin. Phosphorylates MAPT/TAU on 'Thr-548', decreasing significantly MAPT/TAU ability to bind and stabilize microtubules. MAPT/TAU is the principal component of neurofibrillary tangles in Alzheimer disease. Plays an important role in ERBB2-dependent stabilization of microtubules at the cell cortex. Phosphorylates MACF1, inhibiting its binding to microtubules which is critical for its role in bulge stem cell migration and skin wound repair. Probably regulates NF-kappa-B (NFKB1) at the transcriptional level and is required for the NF-kappa-B-mediated anti-apoptotic response to TNF-alpha (TNF/TNFA). Negatively regulates replication in pancreatic beta-cells, resulting in apoptosis, loss of beta-cells and diabetes. Through phosphorylation of the anti-apoptotic protein MCL1, may control cell apoptosis in response to growth factors deprivation. Phosphorylates MUC1 in breast cancer cells, decreasing the interaction of MUC1 with CTNNB1/beta-catenin. Is necessary for the establishment of neuronal polarity and axon outgrowth. Phosphorylates MARK2, leading to inhibition of its activity. Phosphorylates SIK1 at 'Thr-182', leading to sustainment of its activity. Phosphorylates ZC3HAV1 which enhances its antiviral activity. Phosphorylates SNAI1, leading to its ubiquitination and proteasomal degradation. Phosphorylates SFPQ at 'Thr-687' upon T-cell activation. Phosphorylates NR1D1 st 'Ser-55' and 'Ser-59' and stabilizes it by protecting it from proteasomal degradation. Regulates the circadian clock via phosphorylation of the major clock components including BMAL1, CLOCK and PER2. Phosphorylates CLOCK AT 'Ser-427' and targets it for proteasomal degradation. Phosphorylates BMAL1 at 'Ser-17' and 'Ser-21' and primes it for ubiquitination and proteasomal degradation. Phosphorylates FBXL2 at 'Thr-404' and primes it for ubiquitination by the SCF(FBXO3) complex and proteasomal degradation. Phosphorylates OGT at 'Ser-3' or 'Ser-4' which positively regulates its activity. Phosphorylates MYCN in neuroblastoma cells which may promote its degradation. Regulates the circadian rhythmicity of hippocampal long-term potentiation and BMAL1 and PER2 expression. Acts as a regulator of autophagy by mediating phosphorylation of KAT5/TIP60 under starvation conditions, activating KAT5/TIP60 acetyltransferase activity and promoting acetylation of key autophagy regulators, such as ULK1 and RUBCNL/Pacer. Negatively regulates extrinsic apoptotic signaling pathway via death domain receptors. Promotes the formation of an anti-apoptotic complex, made of DDX3X, BRIC2 and GSK3B, at death receptors, including TNFRSF10B. The anti-apoptotic function is most effective with weak apoptotic signals and can be overcome by stronger stimulation. Phosphorylates E2F1, promoting the interaction between E2F1 and USP11, stabilizing E2F1 and promoting its activity. Phosphorylates mTORC2 complex component RICTOR at 'Ser-1235' in response to endoplasmic stress, inhibiting mTORC2. Phosphorylates FXR1, promoting FXR1 ubiquitination by the SCF(FBXO4) complex and FXR1 degradation by the proteasome. Phosphorylates interleukin-22 receptor subunit IL22RA1, preventing its proteasomal degradation. The protein is Glycogen synthase kinase-3 beta of Rattus norvegicus (Rat).